A 1317-amino-acid polypeptide reads, in one-letter code: uncharacterized protein (1317 aa).

Belongs to the oxoprolinase family.

This is an uncharacterized protein from Schizosaccharomyces pombe (strain 972 / ATCC 24843) (Fission yeast).